The primary structure comprises 684 residues: DNA ligase (684 aa).

NAD(+)-binding positions include 34–38, 83–84, and Glu117; these read DFQYD and SL. The active-site N6-AMP-lysine intermediate is the Lys119. Arg140, Glu186, Lys300, and Lys324 together coordinate NAD(+). Positions 418, 421, 436, and 442 each coordinate Zn(2+). Residues 601 to 684 enclose the BRCT domain; that stretch reads PVNLNFDGMK…EMLGEVGSNE (84 aa).

The protein belongs to the NAD-dependent DNA ligase family. LigA subfamily. Requires Mg(2+) as cofactor. It depends on Mn(2+) as a cofactor.

It catalyses the reaction NAD(+) + (deoxyribonucleotide)n-3'-hydroxyl + 5'-phospho-(deoxyribonucleotide)m = (deoxyribonucleotide)n+m + AMP + beta-nicotinamide D-nucleotide.. In terms of biological role, DNA ligase that catalyzes the formation of phosphodiester linkages between 5'-phosphoryl and 3'-hydroxyl groups in double-stranded DNA using NAD as a coenzyme and as the energy source for the reaction. It is essential for DNA replication and repair of damaged DNA. This chain is DNA ligase, found in Chlorobium phaeobacteroides (strain BS1).